Reading from the N-terminus, the 341-residue chain is uncharacterized protein (341 aa).

Residues Ser111, Asp247, and His275 contribute to the active site.

Belongs to the DmpD/TodF/XylF esterase family.

This is an uncharacterized protein from Mycobacterium bovis (strain ATCC BAA-935 / AF2122/97).